The following is a 235-amino-acid chain: Segregation and condensation protein A (235 aa).

This sequence belongs to the ScpA family. As to quaternary structure, component of a cohesin-like complex composed of ScpA, ScpB and the Smc homodimer, in which ScpA and ScpB bind to the head domain of Smc. The presence of the three proteins is required for the association of the complex with DNA.

It localises to the cytoplasm. In terms of biological role, participates in chromosomal partition during cell division. May act via the formation of a condensin-like complex containing Smc and ScpB that pull DNA away from mid-cell into both cell halves. The polypeptide is Segregation and condensation protein A (Streptococcus agalactiae serotype III (strain NEM316)).